The sequence spans 366 residues: MRPDQIQPEMYEKQLQDKQAELAKLMATLSLPEMEVFASQPTHYRMRAEFRIWHDGDDLYYAMFDSADPRTPIRTDQFLAASRLINELMPKLLDAVRDVPVLRYKLFQVDFLTTTTGEALISLLYHKPIDAEWNAAVQQLNNAFPACHFIGRSRKKKQIITRDFVMETLTVNGQKFHYQQVENSFTQPNAGISEKMLEWALDVTKEASGDLLEMYCGNGNFSIPLARRFDRVVATEISKVSVNSAQLNIAINGMHNVQVVKMASEDVSAALNGDVELPKSLVQAGVSELTPSVVLVDPPRAGLDDATVELIRKIDSILYISCNPETLKANLEALSNTHEVVRYAMFDQFPYTHHVETGVFLRRKAS.

Residues glutamine 187, tyrosine 215, asparagine 220, glutamate 236, and aspartate 297 each contribute to the S-adenosyl-L-methionine site. Cysteine 322 acts as the Nucleophile in catalysis. The active-site Proton acceptor is the glutamate 356.

This sequence belongs to the class I-like SAM-binding methyltransferase superfamily. RNA M5U methyltransferase family. TrmA subfamily.

The enzyme catalyses uridine(54) in tRNA + S-adenosyl-L-methionine = 5-methyluridine(54) in tRNA + S-adenosyl-L-homocysteine + H(+). It catalyses the reaction uridine(341) in tmRNA + S-adenosyl-L-methionine = 5-methyluridine(341) in tmRNA + S-adenosyl-L-homocysteine + H(+). In terms of biological role, dual-specificity methyltransferase that catalyzes the formation of 5-methyluridine at position 54 (m5U54) in all tRNAs, and that of position 341 (m5U341) in tmRNA (transfer-mRNA). The polypeptide is tRNA/tmRNA (uracil-C(5))-methyltransferase (Marinomonas sp. (strain MWYL1)).